The chain runs to 494 residues: Putative bifunctional dihydrofolate reductase-thymidylate synthase (494 aa).

In terms of domain architecture, DHFR spans Met1–Arg167. Position 2 to 8 (Gly2 to Thr8) interacts with NADP(+). Residue Asp16 participates in substrate binding. Residues Arg40 to Thr42 and Leu61 to Ser64 each bind NADP(+). Ile103 provides a ligand contact to substrate. NADP(+) is bound at residue Gly104–Gln111. Thr124 contributes to the substrate binding site. Residues Lys170 to Val494 form a thymidylate synthase region. A dUMP-binding site is contributed by Arg231. Cys376 is an active-site residue. DUMP-binding positions include His377, Gln395–Asp399, Asn407, and His437–Tyr439.

It in the N-terminal section; belongs to the dihydrofolate reductase family. The protein in the C-terminal section; belongs to the thymidylate synthase family.

It carries out the reaction (6S)-5,6,7,8-tetrahydrofolate + NADP(+) = 7,8-dihydrofolate + NADPH + H(+). The enzyme catalyses dUMP + (6R)-5,10-methylene-5,6,7,8-tetrahydrofolate = 7,8-dihydrofolate + dTMP. It functions in the pathway cofactor biosynthesis; tetrahydrofolate biosynthesis; 5,6,7,8-tetrahydrofolate from 7,8-dihydrofolate: step 1/1. Its function is as follows. Bifunctional enzyme. Involved in de novo dTMP biosynthesis. Key enzyme in folate metabolism. Can play two different roles depending on the source of dihydrofolate: de novo synthesis of tetrahydrofolate or recycling of the dihydrofolate released as one of the end products of the TS catalyzed reaction. Catalyzes an essential reaction for de novo glycine and purine synthesis, DNA precursor synthesis, and for the conversion of dUMP to dTMP. In Oryza sativa subsp. japonica (Rice), this protein is Putative bifunctional dihydrofolate reductase-thymidylate synthase.